A 208-amino-acid chain; its full sequence is Guanylate kinase (208 aa).

Residues 4-185 (GNLYILSAPS…ALADFQAILR (182 aa)) enclose the Guanylate kinase-like domain. 11 to 18 (APSGAGKS) provides a ligand contact to ATP.

It belongs to the guanylate kinase family.

It localises to the cytoplasm. The catalysed reaction is GMP + ATP = GDP + ADP. Functionally, essential for recycling GMP and indirectly, cGMP. In Pasteurella multocida (strain Pm70), this protein is Guanylate kinase (gmk).